The primary structure comprises 466 residues: Glutamate decarboxylase alpha (466 aa).

Residues threonine 62 and asparagine 83 each coordinate substrate. Residues 126–127, threonine 212, and histidine 275 contribute to the pyridoxal 5'-phosphate site; that span reads SS. The residue at position 276 (lysine 276) is an N6-(pyridoxal phosphate)lysine.

The protein belongs to the group II decarboxylase family. In terms of assembly, homohexamer. Pyridoxal 5'-phosphate is required as a cofactor.

The catalysed reaction is L-glutamate + H(+) = 4-aminobutanoate + CO2. Functionally, converts glutamate to gamma-aminobutyrate (GABA), consuming one intracellular proton in the reaction. The gad system helps to maintain a near-neutral intracellular pH when cells are exposed to extremely acidic conditions. The ability to survive transit through the acidic conditions of the stomach is essential for successful colonization of the mammalian host by commensal and pathogenic bacteria. In Escherichia coli O6:H1 (strain CFT073 / ATCC 700928 / UPEC), this protein is Glutamate decarboxylase alpha (gadA).